The following is a 336-amino-acid chain: Torsin-1B (336 aa).

The first 24 residues, 1-24 (MRRIGAFGGSTALWALLAAHVAGA), serve as a signal peptide directing secretion. A glycan (N-linked (GlcNAc...) asparagine) is linked at N64. 109–116 (GWAGTGKN) serves as a coordination point for ATP. An N-linked (GlcNAc...) asparagine glycan is attached at N165.

This sequence belongs to the ClpA/ClpB family. Torsin subfamily. Homohexamer. Interacts with TOR1A; the interaction may be specific of neural tissues. Interacts with TOR1AIP1; TOR1AIP1 is required for TOR1B location on the nuclear membrane. Interacts (ATP-bound) with TOR1AIP2; important for endoplasmic reticulum integrity. N-glycosylated. Highly expressed in liver and muscle; lower expression levels are observed in brain (at protein level).

It localises to the endoplasmic reticulum lumen. The protein resides in the nucleus membrane. It catalyses the reaction ATP + H2O = ADP + phosphate + H(+). In terms of biological role, may serve as a molecular chaperone assisting in the proper folding of secreted and/or membrane proteins. Plays a role in non-neural cells nuclear envelope and endoplasmic reticulum integrity. May have a redundant function with TOR1A in non-neural tissues. The protein is Torsin-1B (Tor1b) of Mus musculus (Mouse).